Consider the following 210-residue polypeptide: MPSSTPPALFPTLYLASQSPRRQELLQQIGVRFELLLPRPDEDAEALEAELPGEAADAYVRRVTIAKAEAARARLVASGKPASPVLVADTTVTIDGAILGKPANADDALSMLTRLAGREHAVLTAVAVIDADGELLPPALSRSSVRFAPASRDAYARYVESGEPFGKAGAYAIQGRAAEFIERIDGSHSGIMGLPLFETAALLRAARVAF.

The active-site Proton acceptor is D89.

The protein belongs to the Maf family. YhdE subfamily. A divalent metal cation is required as a cofactor.

The protein resides in the cytoplasm. It catalyses the reaction dTTP + H2O = dTMP + diphosphate + H(+). The catalysed reaction is UTP + H2O = UMP + diphosphate + H(+). Its function is as follows. Nucleoside triphosphate pyrophosphatase that hydrolyzes dTTP and UTP. May have a dual role in cell division arrest and in preventing the incorporation of modified nucleotides into cellular nucleic acids. The protein is dTTP/UTP pyrophosphatase of Burkholderia lata (strain ATCC 17760 / DSM 23089 / LMG 22485 / NCIMB 9086 / R18194 / 383).